The sequence spans 506 residues: Carboxyl-terminal PDZ ligand of neuronal nitric oxide synthase protein (506 aa).

A PID domain is found at phenylalanine 26–glycine 196. 2 disordered regions span residues histidine 175–proline 224 and aspartate 241–glutamate 260. A phosphoserine mark is found at serine 188, serine 192, and serine 195. The segment covering threonine 203–alanine 213 has biased composition (low complexity). The residue at position 266 (serine 266) is a Phosphoserine. Positions alanine 322 to leucine 363 form a coiled coil. Residues serine 371, serine 374, serine 401, and serine 417 each carry the phosphoserine modification. An interaction with NOS1 region spans residues glutamine 494–valine 506. Positions isoleucine 504–valine 506 match the PDZ-binding motif.

As to quaternary structure, interacts with the PDZ domain of NOS1 or the second PDZ domain of DLG4 through its C-terminus. Interacts with RASD1 and SYN1, SYN2 and SYN3 via its PID domain. Forms a ternary complex with NOS1 and RASD1. Forms a ternary complex with NOS1 and SYN1. In terms of tissue distribution, expressed in kidney glomeruli podocytes.

The protein localises to the cell projection. Its subcellular location is the filopodium. It localises to the podosome. Adapter protein involved in neuronal nitric-oxide (NO) synthesis regulation via its association with nNOS/NOS1. The complex formed with NOS1 and synapsins is necessary for specific NO and synapsin functions at a presynaptic level. Mediates an indirect interaction between NOS1 and RASD1 leading to enhance the ability of NOS1 to activate RASD1. Competes with DLG4 for interaction with NOS1, possibly affecting NOS1 activity by regulating the interaction between NOS1 and DLG4. In kidney podocytes, plays a role in podosomes and filopodia formation through CDC42 activation. The polypeptide is Carboxyl-terminal PDZ ligand of neuronal nitric oxide synthase protein (Homo sapiens (Human)).